The following is a 98-amino-acid chain: NADH-ubiquinone oxidoreductase chain 4L (98 aa).

3 helical membrane-spanning segments follow: residues 1–21, 29–49, and 61–81; these read MSMV…GLLM, SLLC…ATIL, and IILL…LVTV.

This sequence belongs to the complex I subunit 4L family. Core subunit of respiratory chain NADH dehydrogenase (Complex I) which is composed of 45 different subunits.

It localises to the mitochondrion inner membrane. It catalyses the reaction a ubiquinone + NADH + 5 H(+)(in) = a ubiquinol + NAD(+) + 4 H(+)(out). Its function is as follows. Core subunit of the mitochondrial membrane respiratory chain NADH dehydrogenase (Complex I) which catalyzes electron transfer from NADH through the respiratory chain, using ubiquinone as an electron acceptor. Part of the enzyme membrane arm which is embedded in the lipid bilayer and involved in proton translocation. The sequence is that of NADH-ubiquinone oxidoreductase chain 4L (MT-ND4L) from Pusa caspica (Caspian seal).